A 6781-amino-acid polypeptide reads, in one-letter code: Replicase polyprotein 1ab (6781 aa).

In terms of domain architecture, CoV Nsp1 globular spans 2–109 (ASNHVTLAFA…ELELTFGRRG (108 aa)). E59, N95, E99, and E102 together coordinate ssDNA. Positions 112–364 (IVPVDQYMCG…TKLKFDILSG (253 aa)) constitute a CoV Nsp2 N-terminal domain. Residues 383 to 776 (SALVDIVDDA…AEMYNTYLST (394 aa)) enclose the CoV Nsp2 middle domain. The CoV Nsp2 C-terminal domain occupies 778–895 (VENLVLAGVS…VPICFKKKGG (118 aa)). Residues 896–991 (GDVKFSDEVS…VMVSQWPLND (96 aa)) enclose the Ubiquitin-like 1 domain. Residues 1009-1040 (IDSEGDEVDSSAPEKVADVANSEPGDDGLPVA) are disordered. A Peptidase C16 1 domain is found at 1057 to 1296 (SFIKDTPSTV…EPVVKPFYSY (240 aa)). C1091 acts as the For PL1-PRO activity in catalysis. The C4-type 1; degenerate zinc-finger motif lies at 1162-1193 (CGCGTGERIYEGCAFRMTPTLEPFPYGACAQC). Residues H1239 and D1252 each act as for PL1-PRO activity in the active site. A Macro domain is found at 1297-1465 (KNVDFYQGDF…IFKEALVDTT (169 aa)). A Ubiquitin-like 2 domain is found at 1630–1685 (NKSVVIKVTEDTRSVKAVKVESTATYGQQIGPCLVNDTVVTDNKPVVADVVAKVVP). One can recognise a Peptidase C16 2 domain in the interval 1691–1951 (SHYGFDKAGE…LLDTMNYASE (261 aa)). Residue C1729 is the For PL2-PRO activity of the active site. A C4-type 2; degenerate zinc finger spans residues 1808–1838 (DGCCCSKRVVTAPVVNASVLKLGVEDGLCPH). Residues H1888 and D1901 each act as for PL2-PRO activity in the active site. 2 helical membrane-spanning segments follow: residues 1959-1979 (FMSRNLITVFLYILSILGLCF) and 2022-2042 (WFKVLGKFSLGIYALYALLFM). Residues 1959-2170 (FMSRNLITVF…FGDEIVVFFI (212 aa)) are HD1. One can recognise a 3Ecto domain in the interval 2038-2102 (ALLFMTIRFT…TQVVWQHLRD (65 aa)). Intrachain disulfides connect C2054/C2080 and C2072/C2077. 3 helical membrane-spanning segments follow: residues 2105-2125 (IGNVMPFFYLAFLAIFGGVYV), 2127-2147 (AITLYFIFQYLNSLGVFLGLQ), and 2150-2170 (IWFLQLVPFDVFGDEIVVFFI). Residues 2176–2266 (MFIKHVCLGC…VVKLNVQPTG (91 aa)) are Y1. The 341-residue stretch at 2176-2516 (MFIKHVCLGC…PTVCIANKKG (341 aa)) folds into the CoV Nsp3 Y domain. 8 residues coordinate Zn(2+): H2180, C2185, C2190, C2193, C2226, H2229, C2233, and C2236. Residues 2180 to 2193 (HVCLGCDKASCVAC) are ZF1. Residues 2226–2236 (CKKHNFFCLNC) are ZF2. Residues 2267–2356 (PATILIDKVE…LVDSALLASL (90 aa)) are Y2. Residues 2267-2516 (PATILIDKVE…PTVCIANKKG (250 aa)) form a coV-Y region. Residues 2357 to 2414 (SVDFGASLHSAFVSVLSNSFGKDLSSCNDMQDCKSTLGFDDVPLDTFNAAVAEAHRYD) are Y3. The segment at 2415–2516 (VLLTDMSFNN…PTVCIANKKG (102 aa)) is Y4. 7 consecutive transmembrane segments (helical) span residues 2528-2548 (FFWFLCLFIVAAFFALSFLDF), 2619-2639 (IPAGVYLAGKTLVFAINTIFG), 2654-2674 (GACIFNSACTTLSGLGGTAVY), 2754-2774 (GSDFVCGTGLFTLLMNVISVF), 2787-2807 (ILFNCIIAFVAVAVCFLFTKF), 2814-2834 (MSVGVFTVGACTLLNNVSYIV), and 2863-2883 (LGFLISYILIAPWWVLMVYAF). The tract at residues 2528–2883 (FFWFLCLFIV…PWWVLMVYAF (356 aa)) is HD2. In terms of domain architecture, Nsp4C spans 2902–2997 (LFEGDKFVGS…PTVSYNSTLQ (96 aa)). The Peptidase C30 domain occupies 2998–3299 (AGLRKMAQPS…VRQMYGVNLQ (302 aa)). Residues H3038 and C3141 each act as for 3CL-PRO activity in the active site. The next 7 helical transmembrane spans lie at 3336–3356 (GYVTPMFACLSLLSSLLMFTL), 3361–3381 (LFFQVFLIPALIVTSCINLAF), 3399–3419 (LMGFNAQGLVNIFVCFVVTIL), 3431–3451 (PASSVTYVVALLTAAYNYFYA), 3454–3474 (ILSCAMTLFASVTGNWFVGAV), 3476–3496 (YKVAVYMALRFPTFVAIFGDI), and 3500–3520 (MFCYLVLGYFTCCFYGILYWF). Positions 3336–3520 (GYVTPMFACL…CCFYGILYWF (185 aa)) are HD3. Residues 3580-3662 (SKLTDIKCSN…SYFNDNSMLQ (83 aa)) form the RdRp Nsp7 cofactor domain. The RdRp Nsp8 cofactor domain maps to 3663–3857 (SVASTYVGLP…LGCERIVKLQ (195 aa)). The Nsp9 ssRNA-binding domain occupies 3858-3965 (NNEIIPGKLK…GYIGATVRLQ (108 aa)). The ExoN/MTase coactivator domain occupies 3966–4103 (AGKQTEQAIN…CDRSIMQSTD (138 aa)). Zn(2+) contacts are provided by C4039, C4042, H4048, C4055, C4081, C4084, C4092, and C4094. 2 zinc fingers span residues 4039–4055 (CLYCRAHVEHPSMDGFC) and 4081–4094 (CKVCGCWLSNGCTC). Residues 4106 to 4355 (YLNRVRGSSA…ASECFVKSDI (250 aa)) form the NiRAN domain. Positions 4361 to 4459 (KSYDLLEYDF…WNNDLNLHSS (99 aa)) constitute a Nsp12 Interface domain. H4390, C4396, C4401, C4405, and C4582 together coordinate Zn(2+). Positions 4460–5027 (RLSINELLQF…NMYEKSAVLQ (568 aa)) constitute a Nsp12 RNA-dependent RNA polymerase domain. The interval 4462 to 4676 (SINELLQFCS…HQKHLKSIVN (215 aa)) is rdRp Fingers N-ter. The tract at residues 4677–4715 (TRGASVVIGTTKFYGGWDNMLKNLIDGVENPCLMGWDYP) is rdRp Palm N-ter. Positions 4707–4869 (PCLMGWDYPK…CYNNDYASLG (163 aa)) constitute a RdRp catalytic domain. The interval 4716–4774 (KCDRALPNMIRMISAMILGSKHTTCCSSTDRFFRLCNELAQVLTEVVYSNGGFYLKPGG) is rdRp Fingers C-ter. Zn(2+)-binding residues include H4737, C4740, and C4741. The tract at residues 4775 to 4910 (TTSGDATTAY…NKGPHEFCSQ (136 aa)) is rdRp Palm C-ter. Residues S4854, D4855, and D4856 each act as for RNA-directed RNA polymerase activity in the active site. The interval 4911–5027 (HTMQIVDKEG…NMYEKSAVLQ (117 aa)) is rdRp Thumb. The CV ZBD domain occupies 5028 to 5140 (SAGLCVVCGS…EDFNRIATSD (113 aa)). Zn(2+) contacts are provided by C5032, C5035, C5043, C5046, C5053, C5056, H5060, H5066, C5077, C5082, C5099, and H5102. Positions 5275–5466 (STIHKLHPAF…MCALKPDVFL (192 aa)) constitute a (+)RNA virus helicase ATP-binding domain. 5310–5317 (GPPGSGKS) is a binding site for ATP. The (+)RNA virus helicase C-terminal domain occupies 5467–5636 (HKCYRCPAEI…EGCGLFKDCS (170 aa)). The ExoN domain maps to 5696-5910 (LFCTRDFAMR…RCLAIHDCFV (215 aa)). Active-site for exoribonuclease activity residues include D5714, E5716, and E5815. C5831, C5833, C5849, H5852, H5880, C5884, and H5887 together coordinate Zn(2+). Active-site for exoribonuclease activity residues include H5891 and D5896. C5902 contacts Zn(2+). In terms of domain architecture, N7-MTase spans 5919-6140 (YPFIGNEAVI…NLWQTFSNNL (222 aa)). 5954–5960 (DIGNPKG) lines the S-adenosyl-L-methionine pocket. The segment at 6031–6045 (CNGGSLYVNNHAFHT) is gpppA-binding. Residues C6069, C6086, C6097, and H6100 each contribute to the Zn(2+) site. A Nsp15 N-terminal oligomerization domain is found at 6142–6202 (GLENIAFNVL…NVAFELYAKR (61 aa)). An AV-Nsp11N/CoV-Nsp15M domain is found at 6203 to 6320 (KVGLTPPITI…IYTRKNGKFE (118 aa)). Positions 6337-6477 (SPRSDMEKDF…KDHKLQTFYP (141 aa)) constitute a NendoU domain. Catalysis depends on for uridylate-specific endoribonuclease activity residues H6367, H6382, and K6423. The region spanning 6481–6777 (ASEWKCGYSM…AICGFSNHLV (297 aa)) is the Nidovirus-type SAM-dependent 2'-O-MTase domain. Catalysis depends on for 2'-O-methyltransferase residues K6525, D6609, K6649, and E6682.

This sequence belongs to the coronaviruses polyprotein 1ab family. As to quaternary structure, interacts with PL-PRO and nsp6. Monomer. Homodimer; disulfide-linked. In terms of assembly, interacts with nsp8 and nsp12 to form the replication-transcription complex (RTC): nsp12, nsp7, two subunits of nsp8, and up to two subunits of nsp13. Eight copies of nsp7 and eight copies of nsp8 assemble to form a heterohexadecamer dsRNA-encircling ring structure. As to quaternary structure, interacts with nsp7, nsp13 and nsp12 to form the replication-transcription complex (RTC): nsp12, nsp7, two subunits of nsp8, and up to two subunits of nsp13. Eight copies of nsp7 and eight copies of nsp8 assemble to form a heterohexadecamer dsRNA-encircling ring structure. Homodimer. In terms of assembly, forms a dodecamer and interacts with nsp14 and nsp16; these interactions enhance nsp14 and nsp16 enzymatic activities. Mn(2+) is required as a cofactor. In terms of processing, specific enzymatic cleavages in vivo by its own proteases yield mature proteins. 3CL-PRO and PL-PRO proteinases are autocatalytically processed.

The protein localises to the host cytoplasm. It localises to the host nucleus. Its subcellular location is the host membrane. It is found in the host perinuclear region. The protein resides in the host endoplasmic reticulum. The protein localises to the host endoplasmic reticulum-Golgi intermediate compartment. It catalyses the reaction Thiol-dependent hydrolysis of ester, thioester, amide, peptide and isopeptide bonds formed by the C-terminal Gly of ubiquitin (a 76-residue protein attached to proteins as an intracellular targeting signal).. It carries out the reaction a 5'-end diphospho-ribonucleoside in mRNA + GTP + H(+) = a 5'-end (5'-triphosphoguanosine)-ribonucleoside in mRNA + diphosphate. The enzyme catalyses RNA(n) + a ribonucleoside 5'-triphosphate = RNA(n+1) + diphosphate. The catalysed reaction is ATP + H2O = ADP + phosphate + H(+). It catalyses the reaction a 5'-end (5'-triphosphoguanosine)-ribonucleoside in mRNA + S-adenosyl-L-methionine = a 5'-end (N(7)-methyl 5'-triphosphoguanosine)-ribonucleoside in mRNA + S-adenosyl-L-homocysteine. It carries out the reaction uridylyl-uridylyl-ribonucleotide-RNA = a 3'-end uridylyl-2',3'-cyclophospho-uridine-RNA + a 5'-end dephospho-ribonucleoside-RNA. The enzyme catalyses a 5'-end (N(7)-methyl 5'-triphosphoguanosine)-ribonucleoside in mRNA + S-adenosyl-L-methionine = a 5'-end (N(7)-methyl 5'-triphosphoguanosine)-(2'-O-methyl-ribonucleoside) in mRNA + S-adenosyl-L-homocysteine + H(+). Its activity is regulated as follows. Inhibited by the substrate-analog Cbz-Val-Asn-Ser-Thr-Leu-Gln-CMK. Inhibited by (R)-16. Functionally, multifunctional protein responsible for the transcription of negative stranded RNA, leader RNA, subgenomic mRNAs and progeny virion RNA as well as proteinases responsible for the cleavage of the polyprotein into functional products. Plays a role in the inhibition of host interferon and pro-inflammatory cytokines production. Suppresses host RELA/p65 activation by blocking NFKBIA phosphorylation. Targets also the RLR pathway downstream of the IRF3 activation by targeting host CREBBP to proteasomal degradation. In terms of biological role, responsible for the cleavages located at the N-terminus of the replicase polyprotein. Participates together with nsp4 in the assembly of virally-induced cytoplasmic double-membrane vesicles necessary for viral replication. Forms a molecular pore spanning the double membrane of the coronavirus replication organelle. In addition, PLP2 possesses a deubiquitinating/deISGylating activity and processes both 'Lys-48'- and 'Lys-63'-linked polyubiquitin chains from cellular substrates. PLP2 also antagonizes innate immune induction of type I interferon by blocking the nuclear translocation of host IRF-3. Participates in the inhibition of the integrated stress response (ISR) in the infected host cell. Its function is as follows. Participates in the assembly of virally-induced cytoplasmic double-membrane vesicles necessary for viral replication. Functionally, responsible for the majority of cleavages as it cleaves the C-terminus of replicase polyprotein at 11 sites. Recognizes substrates containing the core sequence [ILMVF]-Q-|-[SGACN]. Also contains an ADP-ribose-1''-phosphate (ADRP)-binding function. Participates in the inhibition of the integrated stress response (ISR) in the infected host cell. Plays a role in the initial induction of autophagosomes from host endoplasmic reticulum. Later, limits the expansion of these phagosomes that are no longer able to deliver viral components to lysosomes. In terms of biological role, plays a role in viral RNA synthesis. Forms a hexadecamer with nsp8 (8 subunits of each) that may participate in viral replication by acting as a primase. Alternatively, may synthesize substantially longer products than oligonucleotide primers. Its function is as follows. Plays a role in viral RNA synthesis. Forms a hexadecamer with nsp7 (8 subunits of each) that may participate in viral replication by acting as a primase. Alternatively, may synthesize substantially longer products than oligonucleotide primers. Functionally, forms a primer, NSP9-pU, which is utilized by the polymerase for the initiation of RNA chains. Interacts with ribosome signal recognition particle RNA (SRP). Together with NSP8, suppress protein integration into the cell membrane, thereby disrupting host immune defenses. Plays a pivotal role in viral transcription by stimulating both nsp14 3'-5' exoribonuclease and nsp16 2'-O-methyltransferase activities. Therefore plays an essential role in viral mRNAs cap methylation. In terms of biological role, RNA-directed RNA polymerase that catalyzes the transcription of viral genomic and subgenomic RNAs. Acts in complex with nsp7 and nsp8 to transcribe both the minus and positive strands of genomic RNA. The kinase-like NiRAN domain of NSP12 attaches one or more nucleotides to the amino terminus of NSP9, forming a covalent RNA-protein intermediate that serves as transcription/replication primer. Subgenomic RNAs (sgRNAs) are formed by discontinuous transcription: The polymerase has the ability to pause at transcription-regulating sequences (TRS) and jump to the leader TRS, resulting in a major deletion. This creates a series of subgenomic RNAs that are replicated, transcribed and translated. In addition, Nsp12 is a subunit of the viral RNA capping enzyme that catalyzes the RNA guanylyltransferase reaction for genomic and sub-genomic RNAs. Subsequently, the NiRAN domain transfers RNA to GDP, and forms the core cap structure GpppA-RNA. Its function is as follows. Plays a role in viral RNA synthesis. Multi-functional protein with a zinc-binding domain in N-terminus displaying RNA and DNA duplex-unwinding activities with 5' to 3' polarity. ATPase activity is strongly stimulated by poly(U), poly(dT), poly(C), poly(dA), but not by poly(G). Functionally, plays a role in viral RNA synthesis through two distinct activities. The N7-guanine methyltransferase activity plays a role in the formation of the cap structure GpppA-RNA. The proofreading exoribonuclease reduces the sensitivity of the virus to RNA mutagens during replication. This activity acts on both ssRNA and dsRNA in a 3'-5' direction. Plays a role in viral transcription/replication and prevents the simultaneous activation of host cell dsRNA sensors, such as MDA5/IFIH1, OAS, and PKR. Acts by degrading the 5'-polyuridines generated during replication of the poly(A) region of viral genomic and subgenomic RNAs. Catalyzes a two-step reaction in which a 2'3'-cyclic phosphate (2'3'-cP) is first generated by 2'-O transesterification, which is then hydrolyzed to a 3'-phosphate (3'-P). If not degraded, poly(U) RNA would hybridize with poly(A) RNA tails and activate host dsRNA sensors. Decreases the RNA levels and thus the expression of host TBK1 and IRF3, antagonizing the host innate response. The polypeptide is Replicase polyprotein 1ab (rep) (Sus scrofa (Pig)).